The primary structure comprises 278 residues: Putative cuticle collagen 91 (278 aa).

2 disordered regions span residues 84 to 109 (LAKNCPPGPPGPPGAPGAAGEPGVDG) and 140 to 278 (GPAG…SVRQ). Pro residues predominate over residues 89-98 (PPGPPGPPGA). Triple-helical region stretches follow at residues 91–120 (GPPGPPGAPGAAGEPGVDGDAGAAGIDGVA), 137–199 (GEAG…NGQR), and 202–264 (GTPG…PGPD). Over residues 99 to 109 (PGAAGEPGVDG) the composition is skewed to low complexity. Residues 158–167 (GADGQGGAPG) show a composition bias toward gly residues. 2 stretches are compositionally biased toward low complexity: residues 172–228 (EGPA…AGAP) and 236–245 (APGVDGQPGA).

This sequence belongs to the cuticular collagen family. In terms of assembly, collagen polypeptide chains are complexed within the cuticle by disulfide bonds and other types of covalent cross-links.

Functionally, nematode cuticles are composed largely of collagen-like proteins. The cuticle functions both as an exoskeleton and as a barrier to protect the worm from its environment. This is Putative cuticle collagen 91 (col-91) from Caenorhabditis elegans.